The chain runs to 121 residues: Large ribosomal subunit protein uL22 (121 aa).

Belongs to the universal ribosomal protein uL22 family. In terms of assembly, part of the 50S ribosomal subunit.

Functionally, this protein binds specifically to 23S rRNA; its binding is stimulated by other ribosomal proteins, e.g. L4, L17, and L20. It is important during the early stages of 50S assembly. It makes multiple contacts with different domains of the 23S rRNA in the assembled 50S subunit and ribosome. The globular domain of the protein is located near the polypeptide exit tunnel on the outside of the subunit, while an extended beta-hairpin is found that lines the wall of the exit tunnel in the center of the 70S ribosome. The protein is Large ribosomal subunit protein uL22 of Synechococcus sp. (strain CC9311).